A 119-amino-acid polypeptide reads, in one-letter code: Ribonuclease P protein component (119 aa).

It belongs to the RnpA family. As to quaternary structure, consists of a catalytic RNA component (M1 or rnpB) and a protein subunit.

It catalyses the reaction Endonucleolytic cleavage of RNA, removing 5'-extranucleotides from tRNA precursor.. Functionally, RNaseP catalyzes the removal of the 5'-leader sequence from pre-tRNA to produce the mature 5'-terminus. It can also cleave other RNA substrates such as 4.5S RNA. The protein component plays an auxiliary but essential role in vivo by binding to the 5'-leader sequence and broadening the substrate specificity of the ribozyme. The polypeptide is Ribonuclease P protein component (Coprothermobacter proteolyticus (strain ATCC 35245 / DSM 5265 / OCM 4 / BT)).